The chain runs to 210 residues: Dof zinc finger protein DOF4.4 (210 aa).

The Dof-type zinc-finger motif lies at 24–78 (RVCPRCDSDNTKFCFYNNYSESQPRYFCKNCRRYWTHGGALRNIPVGGSCRKPKR). Zn(2+) contacts are provided by Cys-26, Cys-29, Cys-51, and Cys-54.

The protein resides in the nucleus. In terms of biological role, transcription factor that binds specifically to a 5'-AA[AG]G-3' consensus core sequence. This is Dof zinc finger protein DOF4.4 (DOF4.4) from Arabidopsis thaliana (Mouse-ear cress).